The following is a 1480-amino-acid chain: DNA polymerase zeta catalytic subunit (1480 aa).

The disordered stretch occupies residues 403–488 (DRSKFPKSPL…GDTRKAGKRL (86 aa)). Residues 411 to 427 (PLNSSQEVTIHSSQDRQ) show a composition bias toward polar residues. Residues 457-468 (TKREIEFCRDLP) are compositionally biased toward basic and acidic residues. The span at 470–479 (RPTSSEPNQG) shows a compositional bias: polar residues. Zn(2+) is bound by residues C1381, C1384, C1400, and C1403. The CysA-type zinc-finger motif lies at 1381–1403 (CSSCLKNNIEIIPDKINSLCSDC). [4Fe-4S] cluster contacts are provided by C1432, C1435, C1446, and C1451. A CysB motif motif is present at residues 1432-1451 (CRGCSKLSSSDPVLCKSNSC).

It belongs to the DNA polymerase type-B family. In terms of assembly, forms DNA polymerase zeta with rev7. The cofactor is [4Fe-4S] cluster.

Its subcellular location is the mitochondrion. It localises to the nucleus. It catalyses the reaction DNA(n) + a 2'-deoxyribonucleoside 5'-triphosphate = DNA(n+1) + diphosphate. Nonessential DNA polymerase. Required for DNA damage induced mutagenesis. Involved in DNA repair, mitochondrial DNA repair and translesion synthesis. Has a role in the bypass of abasic (AP) sites. The protein is DNA polymerase zeta catalytic subunit (rev3) of Schizosaccharomyces pombe (strain 972 / ATCC 24843) (Fission yeast).